A 284-amino-acid polypeptide reads, in one-letter code: Nucleotide-binding protein Pput_0988 (284 aa).

Position 8–15 (8–15 (GRSGSGKS)) interacts with ATP. 60–63 (DARN) provides a ligand contact to GTP.

This sequence belongs to the RapZ-like family.

In terms of biological role, displays ATPase and GTPase activities. The sequence is that of Nucleotide-binding protein Pput_0988 from Pseudomonas putida (strain ATCC 700007 / DSM 6899 / JCM 31910 / BCRC 17059 / LMG 24140 / F1).